The primary structure comprises 248 residues: Ubiquinone/menaquinone biosynthesis C-methyltransferase UbiE (248 aa).

Residues Ser68, Asp92, and Asn120–Ala121 contribute to the S-adenosyl-L-methionine site.

The protein belongs to the class I-like SAM-binding methyltransferase superfamily. MenG/UbiE family.

It carries out the reaction a 2-demethylmenaquinol + S-adenosyl-L-methionine = a menaquinol + S-adenosyl-L-homocysteine + H(+). The enzyme catalyses a 2-methoxy-6-(all-trans-polyprenyl)benzene-1,4-diol + S-adenosyl-L-methionine = a 5-methoxy-2-methyl-3-(all-trans-polyprenyl)benzene-1,4-diol + S-adenosyl-L-homocysteine + H(+). It participates in quinol/quinone metabolism; menaquinone biosynthesis; menaquinol from 1,4-dihydroxy-2-naphthoate: step 2/2. It functions in the pathway cofactor biosynthesis; ubiquinone biosynthesis. Functionally, methyltransferase required for the conversion of demethylmenaquinol (DMKH2) to menaquinol (MKH2) and the conversion of 2-polyprenyl-6-methoxy-1,4-benzoquinol (DDMQH2) to 2-polyprenyl-3-methyl-6-methoxy-1,4-benzoquinol (DMQH2). The protein is Ubiquinone/menaquinone biosynthesis C-methyltransferase UbiE of Rickettsia prowazekii (strain Madrid E).